The chain runs to 423 residues: GTPase Obg (423 aa).

The region spanning 1–158 (MFYDEAKIYV…RWLVLELKLL (158 aa)) is the Obg domain. Residues 159 to 328 (ADVGLIGLPN…LLYHVSGLLA (170 aa)) form the OBG-type G domain. Residues 165-172 (GLPNAGKS), 190-194 (FTTLT), 212-215 (DIPG), 281-284 (NKMD), and 309-311 (SAA) each bind GTP. The Mg(2+) site is built by Ser172 and Thr192. Residues 336–421 (VTAPEEEKVT…IGKFEFEYVE (86 aa)) form the OCT domain.

Belongs to the TRAFAC class OBG-HflX-like GTPase superfamily. OBG GTPase family. As to quaternary structure, monomer. The cofactor is Mg(2+).

Its subcellular location is the cytoplasm. Functionally, an essential GTPase which binds GTP, GDP and possibly (p)ppGpp with moderate affinity, with high nucleotide exchange rates and a fairly low GTP hydrolysis rate. Plays a role in control of the cell cycle, stress response, ribosome biogenesis and in those bacteria that undergo differentiation, in morphogenesis control. The protein is GTPase Obg of Moorella thermoacetica (strain ATCC 39073 / JCM 9320).